Consider the following 165-residue polypeptide: Crossover junction endodeoxyribonuclease RuvC (165 aa).

Catalysis depends on residues Asp-7, Glu-67, and Asp-140. Mg(2+) is bound by residues Asp-7, Glu-67, and Asp-140.

This sequence belongs to the RuvC family. As to quaternary structure, homodimer which binds Holliday junction (HJ) DNA. The HJ becomes 2-fold symmetrical on binding to RuvC with unstacked arms; it has a different conformation from HJ DNA in complex with RuvA. In the full resolvosome a probable DNA-RuvA(4)-RuvB(12)-RuvC(2) complex forms which resolves the HJ. Requires Mg(2+) as cofactor.

Its subcellular location is the cytoplasm. It catalyses the reaction Endonucleolytic cleavage at a junction such as a reciprocal single-stranded crossover between two homologous DNA duplexes (Holliday junction).. In terms of biological role, the RuvA-RuvB-RuvC complex processes Holliday junction (HJ) DNA during genetic recombination and DNA repair. Endonuclease that resolves HJ intermediates. Cleaves cruciform DNA by making single-stranded nicks across the HJ at symmetrical positions within the homologous arms, yielding a 5'-phosphate and a 3'-hydroxyl group; requires a central core of homology in the junction. The consensus cleavage sequence is 5'-(A/T)TT(C/G)-3'. Cleavage occurs on the 3'-side of the TT dinucleotide at the point of strand exchange. HJ branch migration catalyzed by RuvA-RuvB allows RuvC to scan DNA until it finds its consensus sequence, where it cleaves and resolves the cruciform DNA. This chain is Crossover junction endodeoxyribonuclease RuvC, found in Caldanaerobacter subterraneus subsp. tengcongensis (strain DSM 15242 / JCM 11007 / NBRC 100824 / MB4) (Thermoanaerobacter tengcongensis).